The following is a 623-amino-acid chain: UvrABC system protein C (623 aa).

The GIY-YIG domain occupies 13–92 (DKPGVYIMKN…IKKYKPRYNI (80 aa)). Positions 204-239 (NDIIRELKEEMEKASMNLDFEKAADLRDKMLAAQKV) constitute a UVR domain.

This sequence belongs to the UvrC family. In terms of assembly, interacts with UvrB in an incision complex.

Its subcellular location is the cytoplasm. In terms of biological role, the UvrABC repair system catalyzes the recognition and processing of DNA lesions. UvrC both incises the 5' and 3' sides of the lesion. The N-terminal half is responsible for the 3' incision and the C-terminal half is responsible for the 5' incision. The polypeptide is UvrABC system protein C (Clostridium acetobutylicum (strain ATCC 824 / DSM 792 / JCM 1419 / IAM 19013 / LMG 5710 / NBRC 13948 / NRRL B-527 / VKM B-1787 / 2291 / W)).